Here is an 89-residue protein sequence, read N- to C-terminus: Small ribosomal subunit protein uS15 (89 aa).

It belongs to the universal ribosomal protein uS15 family. In terms of assembly, part of the 30S ribosomal subunit. Forms a bridge to the 50S subunit in the 70S ribosome, contacting the 23S rRNA.

In terms of biological role, one of the primary rRNA binding proteins, it binds directly to 16S rRNA where it helps nucleate assembly of the platform of the 30S subunit by binding and bridging several RNA helices of the 16S rRNA. Forms an intersubunit bridge (bridge B4) with the 23S rRNA of the 50S subunit in the ribosome. In Shewanella baltica (strain OS223), this protein is Small ribosomal subunit protein uS15.